Here is a 152-residue protein sequence, read N- to C-terminus: 3-hydroxyacyl-[acyl-carrier-protein] dehydratase FabZ (152 aa).

The active site involves H57.

This sequence belongs to the thioester dehydratase family. FabZ subfamily.

The protein resides in the cytoplasm. It catalyses the reaction a (3R)-hydroxyacyl-[ACP] = a (2E)-enoyl-[ACP] + H2O. Its function is as follows. Involved in unsaturated fatty acids biosynthesis. Catalyzes the dehydration of short chain beta-hydroxyacyl-ACPs and long chain saturated and unsaturated beta-hydroxyacyl-ACPs. The polypeptide is 3-hydroxyacyl-[acyl-carrier-protein] dehydratase FabZ (Bradyrhizobium sp. (strain ORS 278)).